An 89-amino-acid polypeptide reads, in one-letter code: NADH-ubiquinone oxidoreductase chain 4L (89 aa).

3 helical membrane-spanning segments follow: residues 1 to 21 (MNIT…NRKN), 22 to 42 (IILM…LILV), and 57 to 77 (IYII…LVAF).

The protein belongs to the complex I subunit 4L family.

The protein localises to the mitochondrion membrane. The catalysed reaction is a ubiquinone + NADH + 5 H(+)(in) = a ubiquinol + NAD(+) + 4 H(+)(out). Its function is as follows. Core subunit of the mitochondrial membrane respiratory chain NADH dehydrogenase (Complex I) that is believed to belong to the minimal assembly required for catalysis. Complex I functions in the transfer of electrons from NADH to the respiratory chain. The immediate electron acceptor for the enzyme is believed to be ubiquinone. The polypeptide is NADH-ubiquinone oxidoreductase chain 4L (ND4L) (Podospora anserina (strain S / ATCC MYA-4624 / DSM 980 / FGSC 10383) (Pleurage anserina)).